A 224-amino-acid chain; its full sequence is Probable molybdenum cofactor guanylyltransferase (224 aa).

GTP is bound by residues Leu-20 to Gly-22, Lys-33, Asp-88, and Asp-117. Position 117 (Asp-117) interacts with Mg(2+).

Belongs to the MobA family. Mg(2+) serves as cofactor.

It localises to the cytoplasm. The catalysed reaction is Mo-molybdopterin + GTP + H(+) = Mo-molybdopterin guanine dinucleotide + diphosphate. Its function is as follows. Transfers a GMP moiety from GTP to Mo-molybdopterin (Mo-MPT) cofactor (Moco or molybdenum cofactor) to form Mo-molybdopterin guanine dinucleotide (Mo-MGD) cofactor. This chain is Probable molybdenum cofactor guanylyltransferase, found in Methanosarcina mazei (strain ATCC BAA-159 / DSM 3647 / Goe1 / Go1 / JCM 11833 / OCM 88) (Methanosarcina frisia).